The chain runs to 158 residues: Cyclic pyranopterin monophosphate synthase (158 aa).

Residues 75–77 (LCH) and 113–114 (ME) each bind substrate. The active site involves D128.

Belongs to the MoaC family. Homohexamer; trimer of dimers.

The catalysed reaction is (8S)-3',8-cyclo-7,8-dihydroguanosine 5'-triphosphate = cyclic pyranopterin phosphate + diphosphate. It functions in the pathway cofactor biosynthesis; molybdopterin biosynthesis. Functionally, catalyzes the conversion of (8S)-3',8-cyclo-7,8-dihydroguanosine 5'-triphosphate to cyclic pyranopterin monophosphate (cPMP). The sequence is that of Cyclic pyranopterin monophosphate synthase from Actinobacillus succinogenes (strain ATCC 55618 / DSM 22257 / CCUG 43843 / 130Z).